We begin with the raw amino-acid sequence, 269 residues long: uncharacterized protein (269 aa).

Helical transmembrane passes span 65-85 (FSLF…LFVM), 156-176 (VTSV…ISMV), 182-202 (YTRI…WLGF), 206-226 (MMSF…NDFW), and 242-262 (TLSA…EFSF). The short motif at 266-269 (KKKW) is the Di-lysine motif element.

This sequence belongs to the SURF4 family.

The protein localises to the membrane. This is an uncharacterized protein from Caenorhabditis elegans.